The chain runs to 1136 residues: Probable RNA-dependent RNA polymerase 2 (1136 aa).

The tract at residues serine 965–proline 989 is disordered. The span at aspartate 967–proline 980 shows a compositional bias: low complexity.

This sequence belongs to the RdRP family.

It catalyses the reaction RNA(n) + a ribonucleoside 5'-triphosphate = RNA(n+1) + diphosphate. Probably involved in the RNA silencing pathway and required for the generation of small interfering RNAs (siRNAs). This is Probable RNA-dependent RNA polymerase 2 (RDR2) from Oryza sativa subsp. japonica (Rice).